Here is a 485-residue protein sequence, read N- to C-terminus: Aldehyde dehydrogenase family 3 member A2 (485 aa).

Over 1–463 the chain is Cytoplasmic; the sequence is MELEVRRVRQ…FLLKRFNKEK (463 aa). 185 to 190 lines the NAD(+) pocket; sequence GNTAVG. Catalysis depends on residues Glu207 and Cys241. Position 293 is a phosphoserine (Ser293). A helical membrane pass occupies residues 464-484; that stretch reads LGLLLLTFLGIVAAVLVKAEY. A Prevents secretion from ER motif is present at residues 481–484; the sequence is KAEY.

This sequence belongs to the aldehyde dehydrogenase family. In terms of assembly, homodimer.

The protein localises to the microsome membrane. It is found in the endoplasmic reticulum membrane. It carries out the reaction an aldehyde + NAD(+) + H2O = a carboxylate + NADH + 2 H(+). The enzyme catalyses a fatty aldehyde + NAD(+) + H2O = a fatty acid + NADH + 2 H(+). It catalyses the reaction (2E)-hexadecenal + NAD(+) + H2O = (E)-hexadec-2-enoate + NADH + 2 H(+). The catalysed reaction is hexadecanoate + NADH + 2 H(+) = hexadecanal + NAD(+) + H2O. It carries out the reaction 22-oxodocosanoate + NAD(+) + H2O = docosanedioate + NADH + 2 H(+). The enzyme catalyses 2,6,10,14-tetramethylpentadecanal + NAD(+) + H2O = 2,6,10,14-tetramethylpentadecanoate + NADH + 2 H(+). It catalyses the reaction octadecanal + NAD(+) + H2O = octadecanoate + NADH + 2 H(+). The catalysed reaction is dodecanoate + NADH + 2 H(+) = dodecanal + NAD(+) + H2O. It carries out the reaction decanal + NAD(+) + H2O = decanoate + NADH + 2 H(+). The enzyme catalyses tetradecanal + NAD(+) + H2O = tetradecanoate + NADH + 2 H(+). It catalyses the reaction octanal + NAD(+) + H2O = octanoate + NADH + 2 H(+). The catalysed reaction is heptanal + NAD(+) + H2O = heptanoate + NADH + 2 H(+). It carries out the reaction (2E,6E)-farnesal + NAD(+) + H2O = (2E,6E)-farnesoate + NADH + 2 H(+). In terms of biological role, catalyzes the oxidation of medium and long-chain aliphatic aldehydes to fatty acids. Active on a variety of saturated and unsaturated aliphatic aldehydes between 6 and 24 carbons in length. Responsible for conversion of the sphingosine 1-phosphate (S1P) degradation product hexadecenal to hexadecenoic acid. The polypeptide is Aldehyde dehydrogenase family 3 member A2 (ALDH3A2) (Pongo abelii (Sumatran orangutan)).